A 190-amino-acid polypeptide reads, in one-letter code: Protein E6C (190 aa).

Residues 1-15 (MFGVAKPPPSPIPKP) are compositionally biased toward pro residues. 2 disordered regions span residues 1–110 (MFGV…EGRR) and 160–190 (PRTPGPVAPIPELPGEADDPPTRTPPPPPDD). Basic residues predominate over residues 36-46 (ARQRASTRHRP). Pro residues-rich tracts occupy residues 162-171 (TPGPVAPIPE) and 181-190 (TRTPPPPPDD).

The protein is Protein E6C (13) of Equus caballus (Horse).